Here is a 337-residue protein sequence, read N- to C-terminus: Anthranilate phosphoribosyltransferase (337 aa).

5-phospho-alpha-D-ribose 1-diphosphate is bound by residues glycine 81, 84–85, threonine 89, 91–94, 109–117, and threonine 121; these read GD, NIST, and KHGNRALSS. Anthranilate is bound at residue glycine 81. Mg(2+) is bound at residue serine 93. Asparagine 112 serves as a coordination point for anthranilate. Residue arginine 167 participates in anthranilate binding. Aspartate 225 and glutamate 226 together coordinate Mg(2+).

Belongs to the anthranilate phosphoribosyltransferase family. In terms of assembly, homodimer. The cofactor is Mg(2+).

It catalyses the reaction N-(5-phospho-beta-D-ribosyl)anthranilate + diphosphate = 5-phospho-alpha-D-ribose 1-diphosphate + anthranilate. The protein operates within amino-acid biosynthesis; L-tryptophan biosynthesis; L-tryptophan from chorismate: step 2/5. Functionally, catalyzes the transfer of the phosphoribosyl group of 5-phosphorylribose-1-pyrophosphate (PRPP) to anthranilate to yield N-(5'-phosphoribosyl)-anthranilate (PRA). The chain is Anthranilate phosphoribosyltransferase from Rhizobium meliloti (strain 1021) (Ensifer meliloti).